A 302-amino-acid polypeptide reads, in one-letter code: MPINIPINLPAKQILESENIFVMDEKRAFHQDIRPLNIVILNLMPQKIKTETQLLRMLGNSPLQVYFTFLIPSTHTPKHTPRQHLEQFYTTFSSIRDRKFDGMIITGAPIEHLEYEEVSYWEELREILDWSKTHVTSTLHICWGAQAGLYHHYGIRKVKLPKKTFGVFEHRIMEKNERLVRGFEEFYYVPHSRHTDINMDDLKAVSHLKVLSISDEAGVCLIASKDEKQVFLTGHPEYDTDTLKEEYERDLARNMEIDPPVNYFKEGPDGAVPVNRWKAHATLLFMNWLNYYVYQETPYEWK.

Residue Cys-142 is the Acyl-thioester intermediate of the active site. Residues Lys-163 and Ser-192 each coordinate substrate. His-235 acts as the Proton acceptor in catalysis. Residue Glu-237 is part of the active site. Position 249 (Arg-249) interacts with substrate.

This sequence belongs to the MetA family.

It is found in the cytoplasm. The enzyme catalyses L-homoserine + acetyl-CoA = O-acetyl-L-homoserine + CoA. The protein operates within amino-acid biosynthesis; L-methionine biosynthesis via de novo pathway; O-acetyl-L-homoserine from L-homoserine: step 1/1. Functionally, transfers an acetyl group from acetyl-CoA to L-homoserine, forming acetyl-L-homoserine. This Bacillus licheniformis (strain ATCC 14580 / DSM 13 / JCM 2505 / CCUG 7422 / NBRC 12200 / NCIMB 9375 / NCTC 10341 / NRRL NRS-1264 / Gibson 46) protein is Homoserine O-acetyltransferase.